Here is a 924-residue protein sequence, read N- to C-terminus: Lon protease homolog 3, mitochondrial (924 aa).

The N-terminal 63 residues, 1 to 63 (MMPKRFNTSG…PVQSLLLFRA (63 aa)), are a transit peptide targeting the mitochondrion. The Lon N-terminal domain maps to 112 to 325 (VIALPLPHKP…LTLELVKKQV (214 aa)). ATP is bound at residue 447–454 (GPPGVGKT). The region spanning 738-922 (QTPVGVVMGL…EKIFDLAFNY (185 aa)) is the Lon proteolytic domain. Catalysis depends on residues Ser828 and Lys871.

The protein belongs to the peptidase S16 family. As to quaternary structure, homohexamer or homoheptamer. Organized in a ring with a central cavity.

Its subcellular location is the mitochondrion matrix. It catalyses the reaction Hydrolysis of proteins in presence of ATP.. ATP-dependent serine protease that mediates the selective degradation of misfolded, unassembled or oxidatively damaged polypeptides as well as certain short-lived regulatory proteins in the mitochondrial matrix. May also have a chaperone function in the assembly of inner membrane protein complexes. Participates in the regulation of mitochondrial gene expression and in the maintenance of the integrity of the mitochondrial genome. Binds to mitochondrial DNA in a site-specific manner. This is Lon protease homolog 3, mitochondrial (LON3) from Arabidopsis thaliana (Mouse-ear cress).